A 219-amino-acid chain; its full sequence is 3-demethoxyubiquinol 3-hydroxylase (219 aa).

The tract at residues 21-51 (RTLTPGTTQAERTPAHAAPAPDAPEAGTLPS) is disordered. A compositionally biased stretch (low complexity) spans 35–46 (AHAAPAPDAPEA). Positions 68, 98, 101, 150, 182, and 185 each coordinate Fe cation.

Belongs to the COQ7 family. It depends on Fe cation as a cofactor.

It localises to the cell membrane. The enzyme catalyses a 5-methoxy-2-methyl-3-(all-trans-polyprenyl)benzene-1,4-diol + AH2 + O2 = a 3-demethylubiquinol + A + H2O. The protein operates within cofactor biosynthesis; ubiquinone biosynthesis. Functionally, catalyzes the hydroxylation of 2-nonaprenyl-3-methyl-6-methoxy-1,4-benzoquinol during ubiquinone biosynthesis. The sequence is that of 3-demethoxyubiquinol 3-hydroxylase from Alcanivorax borkumensis (strain ATCC 700651 / DSM 11573 / NCIMB 13689 / SK2).